The following is a 438-amino-acid chain: Death-associated inhibitor of apoptosis 1 (438 aa).

A BIR 1 repeat occupies 44-110; the sequence is EETRLKTFTD…QRWSPNCPLL (67 aa). The tract at residues 194 to 213 is disordered; the sequence is TATQATGDVQPETCRPSAAS. Residues 226-293 form a BIR 2 repeat; it reads ETARLRTFEA…ALWLSQCRFV (68 aa). Cys263, Cys266, His283, and Cys290 together coordinate Zn(2+). Residues 322 to 346 form a disordered region; that stretch reads GGVAVASTQASEEEQQTSLSSEEAV. Residues 327-345 are compositionally biased toward low complexity; it reads ASTQASEEEQQTSLSSEEA. An RING-type zinc finger spans residues 391 to 426; sequence CKICYGAEYNTAFLPCGHVVACAKCASSVTKCPLCR.

Belongs to the IAP family. In terms of assembly, interacts (via BIR 2 domain) with Dronc (via residues 114-125). Rpr, hid and grim can outcompete Dronc for binding Diap1 therefore removing Diap1-mediated ubiquitination. Interacts (via BIR 2 domain) with HtrA2; this displaces any bound Dronc. Interacts with Strica. The N-terminally cleaved form interacts with Ubr3 (via UBR-type zinc finger); the interaction promotes the recruitment and uniquitination of substrate capases such as Dronc. Ubiquitinated and degraded by HtrA2 in apoptotic cells; proteolytic cleavage at specific sites in the BIR domain linker region generating inactive fragments. Mutation of one site reduces but does not abolish cleavage as another site is selected by the protease.

The enzyme catalyses S-ubiquitinyl-[E2 ubiquitin-conjugating enzyme]-L-cysteine + [acceptor protein]-L-lysine = [E2 ubiquitin-conjugating enzyme]-L-cysteine + N(6)-ubiquitinyl-[acceptor protein]-L-lysine.. In terms of biological role, anti-apoptotic protein which functions as a caspase regulator, using its E3 ubiquitin-protein ligase activity to smother caspase activity. Binds, ubiquitinates and inactivates initiator caspase Dronc, and effector caspases Drice and Dcp-1. Acts as a Nedd8-E3 ubiquitin-protein ligase for Drice. Suppresses apoptosis by targeting the apoptosome for ubiquitination and inactivation. Plays an important role in cell motility. Overexpression suppresses rpr and hid-dependent cell death in the eye. Interaction of Diap1 with Dronc is required to suppress Dronc-mediated cell death through Diap1-mediated ubiquitination of Dronc. Acts as a positive regulator of Wnt signaling. This Drosophila melanogaster (Fruit fly) protein is Death-associated inhibitor of apoptosis 1 (Diap1).